Here is a 483-residue protein sequence, read N- to C-terminus: Cysteine--tRNA ligase (483 aa).

Cysteine 27 serves as a coordination point for Zn(2+). Positions isoleucine 29–histidine 39 match the 'HIGH' region motif. Zn(2+) is bound by residues cysteine 208, histidine 231, and glutamate 235. The short motif at lysine 263–serine 267 is the 'KMSKS' region element. Lysine 266 is a binding site for ATP.

It belongs to the class-I aminoacyl-tRNA synthetase family. In terms of assembly, monomer. Zn(2+) serves as cofactor.

The protein localises to the cytoplasm. The enzyme catalyses tRNA(Cys) + L-cysteine + ATP = L-cysteinyl-tRNA(Cys) + AMP + diphosphate. This Desulfovibrio desulfuricans (strain ATCC 27774 / DSM 6949 / MB) protein is Cysteine--tRNA ligase.